Reading from the N-terminus, the 536-residue chain is Multifunctional cytochrome P450 monooxygenase af510 (536 aa).

The chain crosses the membrane as a helical span at residues 4-24; sequence ELSTLQLSCVAFVAFMAVLVF. N-linked (GlcNAc...) asparagine glycosylation is found at asparagine 210 and asparagine 293. Cysteine 448 contacts heme.

Belongs to the cytochrome P450 family. Heme is required as a cofactor.

It localises to the membrane. The catalysed reaction is (+)-exo-beta-bergamotene + 2 reduced [NADPH--hemoprotein reductase] + 3 O2 = 5-dehydro-6-demethoxyfumagillol + 2 oxidized [NADPH--hemoprotein reductase] + 3 H2O + 2 H(+). The protein operates within secondary metabolite biosynthesis; terpenoid biosynthesis. In terms of biological role, multifunctional cytochrome P450 monooxygenase; part of the gene cluster that mediates the biosynthesis of fumagillin, a meroterpenoid that has numerous biological activities including irreversible inhibition of human type 2 methionine aminopeptidase (METAP2). Within the pathway, the multifunctional cytochrome P450 monooxygenase af510 acts as a 2,4,6-trichlorophenol monooxygenase that first performs the C-H hydroxylation at the bridgehead C5 position to yield 5R-hydroxyl-beta-trans-bergamotene. Subsequently, a four electron oxidation initiated at C-9 coupled to cleavage of the cyclobutane C5-C8 bond of the bicyclo[3.1.1] core yields the epoxyketone intermediate 5-keto-cordycol. An additional epoxidation reaction also catalyzed by af510 then furnishes the characteristic bisepoxide ketone 5-keto-demethoxyfumagillol. The pathway begins with the conversion of farnesyl pyrophosphate (FPP) to beta-trans-bergamotene by the membrane-bound beta-trans-bergamotene synthase af520. The multifunctional cytochrome P450 monooxygenase af510 then converts beta-trans-bergamotene into 5-keto-demethoxyfumagillol via several oxydation steps. 5-keto-demethoxyfumagillol is then subjected to successive C-6 hydroxylation and O-methylation by the dioxygenase af480 and O-methyltransferase af390-400, respectively, to yield 5-keto-fumagillol, which is then stereoselectively reduced by the keto-reductase af490 to 5R-hydroxy-seco-sesquiterpene. The next step is the polyketide transferase af380-catalyzed transfer of a dodecapentaenoyl group synthesized by the polyketide synthase af370 onto 5R-hydroxy-seco-sesquiterpene which leads to the production of prefumagillin. Finally, oxidative cleavage by the monooxygenase af470 converts prefumagillin to fumagillin. The chain is Multifunctional cytochrome P450 monooxygenase af510 from Aspergillus fumigatus (strain ATCC MYA-4609 / CBS 101355 / FGSC A1100 / Af293) (Neosartorya fumigata).